A 313-amino-acid polypeptide reads, in one-letter code: uncharacterized protein (313 aa).

2 disordered regions span residues 24–53 (EEGE…PTPN) and 190–291 (TALS…PCAR). A compositionally biased stretch (polar residues) spans 211–229 (TQNYVLKLQLSSPNSQPMS). The segment covering 239-260 (SCSSSNCSSSSSSSACSSVSIS) has biased composition (low complexity). The segment covering 261 to 284 (DPNNITAYETNNVNPQFPSNQPLD) has biased composition (polar residues).

This is an uncharacterized protein from Saccharomyces cerevisiae (strain ATCC 204508 / S288c) (Baker's yeast).